The chain runs to 183 residues: MKYIEVDEELYRHIASKTERIGESASDILRRLLGLSVDTVEQAQPQAISQPSLEAATPEPQFVPQVETFVAAADFHQLVDEHKLEQQKGAVGRFLFLLESLYQLNKTQFAQILQIQGRDRLYFARSREELLKASATANPKEIGQTGFWVTTNNNTAKKRAILAEALVQFGCDAEIANGIAERV.

An interaction with DNA region spans residues 90–91 (AV).

Belongs to the SeqA family. Homodimer. Polymerizes to form helical filaments.

The protein localises to the cytoplasm. Negative regulator of replication initiation, which contributes to regulation of DNA replication and ensures that replication initiation occurs exactly once per chromosome per cell cycle. Binds to pairs of hemimethylated GATC sequences in the oriC region, thus preventing assembly of replication proteins and re-initiation at newly replicated origins. Repression is relieved when the region becomes fully methylated. The sequence is that of Negative modulator of initiation of replication from Shewanella oneidensis (strain ATCC 700550 / JCM 31522 / CIP 106686 / LMG 19005 / NCIMB 14063 / MR-1).